The chain runs to 425 residues: Trigger factor (425 aa).

Positions 158-231 (GDLVRISMEV…VQEVYRRTLP (74 aa)) constitute a PPIase FKBP-type domain.

It belongs to the FKBP-type PPIase family. Tig subfamily.

It is found in the cytoplasm. It catalyses the reaction [protein]-peptidylproline (omega=180) = [protein]-peptidylproline (omega=0). In terms of biological role, involved in protein export. Acts as a chaperone by maintaining the newly synthesized protein in an open conformation. Functions as a peptidyl-prolyl cis-trans isomerase. The protein is Trigger factor of Thermotoga neapolitana (strain ATCC 49049 / DSM 4359 / NBRC 107923 / NS-E).